We begin with the raw amino-acid sequence, 74 residues long: Large ribosomal subunit protein bL31 (74 aa).

Residues Cys16, Cys18, Cys37, and Cys40 each coordinate Zn(2+).

It belongs to the bacterial ribosomal protein bL31 family. Type A subfamily. Part of the 50S ribosomal subunit. The cofactor is Zn(2+).

Binds the 23S rRNA. The polypeptide is Large ribosomal subunit protein bL31 (Nitrosomonas europaea (strain ATCC 19718 / CIP 103999 / KCTC 2705 / NBRC 14298)).